The primary structure comprises 303 residues: Phosphatidylglycerol--prolipoprotein diacylglyceryl transferase (303 aa).

3 helical membrane passes run 18 to 38 (VGFF…LIGL), 58 to 78 (LLPI…VIFE), and 107 to 127 (WQGG…ILIF). Arg154 contacts a 1,2-diacyl-sn-glycero-3-phospho-(1'-sn-glycerol). Helical transmembrane passes span 193–213 (PTFL…ISLI) and 266–286 (IAQL…FWIY).

It belongs to the Lgt family.

The protein localises to the cell inner membrane. The catalysed reaction is L-cysteinyl-[prolipoprotein] + a 1,2-diacyl-sn-glycero-3-phospho-(1'-sn-glycerol) = an S-1,2-diacyl-sn-glyceryl-L-cysteinyl-[prolipoprotein] + sn-glycerol 1-phosphate + H(+). The protein operates within protein modification; lipoprotein biosynthesis (diacylglyceryl transfer). Its function is as follows. Catalyzes the transfer of the diacylglyceryl group from phosphatidylglycerol to the sulfhydryl group of the N-terminal cysteine of a prolipoprotein, the first step in the formation of mature lipoproteins. In Prochlorococcus marinus (strain MIT 9211), this protein is Phosphatidylglycerol--prolipoprotein diacylglyceryl transferase.